The following is a 567-amino-acid chain: Proline--tRNA ligase (567 aa).

It belongs to the class-II aminoacyl-tRNA synthetase family. ProS type 1 subfamily. Homodimer.

The protein localises to the cytoplasm. The catalysed reaction is tRNA(Pro) + L-proline + ATP = L-prolyl-tRNA(Pro) + AMP + diphosphate. Catalyzes the attachment of proline to tRNA(Pro) in a two-step reaction: proline is first activated by ATP to form Pro-AMP and then transferred to the acceptor end of tRNA(Pro). As ProRS can inadvertently accommodate and process non-cognate amino acids such as alanine and cysteine, to avoid such errors it has two additional distinct editing activities against alanine. One activity is designated as 'pretransfer' editing and involves the tRNA(Pro)-independent hydrolysis of activated Ala-AMP. The other activity is designated 'posttransfer' editing and involves deacylation of mischarged Ala-tRNA(Pro). The misacylated Cys-tRNA(Pro) is not edited by ProRS. The polypeptide is Proline--tRNA ligase (Stenotrophomonas maltophilia (strain K279a)).